An 87-amino-acid chain; its full sequence is DNA-directed RNA polymerase subunit omega (87 aa).

This sequence belongs to the RNA polymerase subunit omega family. In terms of assembly, the RNAP catalytic core consists of 2 alpha, 1 beta, 1 beta' and 1 omega subunit. When a sigma factor is associated with the core the holoenzyme is formed, which can initiate transcription.

It carries out the reaction RNA(n) + a ribonucleoside 5'-triphosphate = RNA(n+1) + diphosphate. Promotes RNA polymerase assembly. Latches the N- and C-terminal regions of the beta' subunit thereby facilitating its interaction with the beta and alpha subunits. The polypeptide is DNA-directed RNA polymerase subunit omega (Azotobacter vinelandii (strain DJ / ATCC BAA-1303)).